The chain runs to 225 residues: Orotate phosphoribosyltransferase (225 aa).

Lys29 is a binding site for 5-phospho-alpha-D-ribose 1-diphosphate. 37-38 (FF) lines the orotate pocket. Residues 75–76 (YK), Arg105, Lys106, Lys109, His111, and 130–138 (DDVITAGTS) contribute to the 5-phospho-alpha-D-ribose 1-diphosphate site. Orotate-binding residues include Thr134 and Arg162.

Belongs to the purine/pyrimidine phosphoribosyltransferase family. PyrE subfamily. Homodimer. It depends on Mg(2+) as a cofactor.

It carries out the reaction orotidine 5'-phosphate + diphosphate = orotate + 5-phospho-alpha-D-ribose 1-diphosphate. It functions in the pathway pyrimidine metabolism; UMP biosynthesis via de novo pathway; UMP from orotate: step 1/2. Functionally, catalyzes the transfer of a ribosyl phosphate group from 5-phosphoribose 1-diphosphate to orotate, leading to the formation of orotidine monophosphate (OMP). The chain is Orotate phosphoribosyltransferase from Bordetella petrii (strain ATCC BAA-461 / DSM 12804 / CCUG 43448).